Reading from the N-terminus, the 367-residue chain is Anthranilate phosphoribosyltransferase (367 aa).

Residues glycine 105, 108–109, threonine 113, 115–118, 133–141, and glycine 145 each bind 5-phospho-alpha-D-ribose 1-diphosphate; these read GD, NIST, and KHGNRAASS. Glycine 105 lines the anthranilate pocket. Serine 117 contributes to the Mg(2+) binding site. Position 136 (asparagine 136) interacts with anthranilate. Arginine 191 is an anthranilate binding site. Residues aspartate 249 and glutamate 250 each coordinate Mg(2+).

The protein belongs to the anthranilate phosphoribosyltransferase family. In terms of assembly, homodimer. Requires Mg(2+) as cofactor.

The catalysed reaction is N-(5-phospho-beta-D-ribosyl)anthranilate + diphosphate = 5-phospho-alpha-D-ribose 1-diphosphate + anthranilate. The protein operates within amino-acid biosynthesis; L-tryptophan biosynthesis; L-tryptophan from chorismate: step 2/5. Catalyzes the transfer of the phosphoribosyl group of 5-phosphorylribose-1-pyrophosphate (PRPP) to anthranilate to yield N-(5'-phosphoribosyl)-anthranilate (PRA). In Corynebacterium jeikeium (strain K411), this protein is Anthranilate phosphoribosyltransferase.